Reading from the N-terminus, the 323-residue chain is Polycomb complex protein BMI-1-B (323 aa).

The RING-type zinc finger occupies 18-57; sequence CVLCGGYFIDAATIIECLHSFCKTCIVRYLETSKYCPICD. Residues 81 to 95 carry the Nuclear localization signal motif; that stretch reads KLVPGLFKGEMKRRR. A disordered region spans residues 238-310; sequence PHTDRINNTS…HQNPFANRAR (73 aa). The segment covering 287-301 has biased composition (low complexity); sequence HISSTINGTNSSSSH.

In terms of assembly, component of a PRC1-like complex. Interacts with cbx4.

It is found in the nucleus. Functionally, component of a Polycomb group (PcG) multiprotein PRC1-like complex, a complex class required to maintain the transcriptionally repressive state of many genes, including Hox genes, throughout development. PcG PRC1 complex acts via chromatin remodeling and modification of histones; it mediates monoubiquitination of histone H2A 'Lys-119', rendering chromatin heritably changed in its expressibility. In the PRC1 complex, it is required to stimulate the E3 ubiquitin-protein ligase activity of rnf2. The chain is Polycomb complex protein BMI-1-B (bmi1b) from Xenopus laevis (African clawed frog).